The chain runs to 243 residues: Zinc import ATP-binding protein ZnuC 2 (243 aa).

In terms of domain architecture, ABC transporter spans 3–218 (LSLHQLSVKF…PEYKVLFGLD (216 aa)). 35–42 (GPNGSGKS) lines the ATP pocket.

This sequence belongs to the ABC transporter superfamily. Zinc importer (TC 3.A.1.15.5) family. As to quaternary structure, the complex is composed of two ATP-binding proteins (ZnuC), two transmembrane proteins (ZnuB) and a solute-binding protein (ZnuA).

It localises to the cell inner membrane. The enzyme catalyses Zn(2+)(out) + ATP(in) + H2O(in) = Zn(2+)(in) + ADP(in) + phosphate(in) + H(+)(in). Functionally, part of the ABC transporter complex ZnuABC involved in zinc import. Responsible for energy coupling to the transport system. The protein is Zinc import ATP-binding protein ZnuC 2 of Aliivibrio fischeri (strain ATCC 700601 / ES114) (Vibrio fischeri).